Reading from the N-terminus, the 450-residue chain is L-lysine-epsilon aminotransferase (450 aa).

Residues Gly127 and Ala128 each contribute to the pyridoxal 5'-phosphate site. The 2-oxoglutarate site is built by Arg168 and Gln274. Arg168 lines the L-lysine pocket. Gln274 is a binding site for pyridoxal 5'-phosphate. Lys300 carries the post-translational modification N6-(pyridoxal phosphate)lysine. Arg423 serves as a coordination point for 2-oxoglutarate.

This sequence belongs to the class-III pyridoxal-phosphate-dependent aminotransferase family. Pyridoxal 5'-phosphate is required as a cofactor.

The catalysed reaction is L-lysine + 2-oxoglutarate = (S)-2-amino-6-oxohexanoate + L-glutamate. It functions in the pathway antibiotic biosynthesis; cephamycin C biosynthesis. Catalyzes the transfer of the terminal amino group of L-lysine to alpha-ketoglutarate to yield L-glutamate and 2-aminoadipate 6-semialdehyde ((S)-2-amino-6-oxohexanoate), which is spontaneously converted to the dehydrated form 1-piperideine 6-carboxylate. The chain is L-lysine-epsilon aminotransferase from Amycolatopsis lactamdurans (Nocardia lactamdurans).